The following is a 1162-amino-acid chain: Paired amphipathic helix protein Sin3-like 5 (1162 aa).

Residues 1 to 37 are disordered; it reads MKRVREEVYVEPQMRGPTVSSRGETNGRPSTISGGGT. Polar residues predominate over residues 18-30; the sequence is TVSSRGETNGRPS. PAH domains are found at residues 28-109 and 123-193; these read RPST…LPKG and KPVD…LPDF. 4 disordered regions span residues 702–727, 743–779, 803–830, and 1121–1143; these read RVSD…ESCE, QKLP…DDDN, GGQV…SNEG, and KKAT…ELSR. Serine 817 is subject to Phosphoserine. Positions 1123–1139 are enriched in polar residues; the sequence is ATLNPTGPENVKTSDSS.

Its subcellular location is the nucleus. Its function is as follows. Acts as a transcriptional repressor. Plays roles in regulating gene expression and genome stability. This chain is Paired amphipathic helix protein Sin3-like 5 (SNL5), found in Arabidopsis thaliana (Mouse-ear cress).